We begin with the raw amino-acid sequence, 410 residues long: Arginine deiminase (410 aa).

C399 serves as the catalytic Amidino-cysteine intermediate.

Belongs to the arginine deiminase family.

The protein resides in the cytoplasm. The catalysed reaction is L-arginine + H2O = L-citrulline + NH4(+). It functions in the pathway amino-acid degradation; L-arginine degradation via ADI pathway; carbamoyl phosphate from L-arginine: step 1/2. This chain is Arginine deiminase, found in Listeria monocytogenes serotype 4a (strain HCC23).